The primary structure comprises 529 residues: Bifunctional purine biosynthesis protein PurH (529 aa).

In terms of domain architecture, MGS-like spans 1–148 (MQQRRPIRRA…KNHKDVAIVV (148 aa)).

Belongs to the PurH family.

It carries out the reaction (6R)-10-formyltetrahydrofolate + 5-amino-1-(5-phospho-beta-D-ribosyl)imidazole-4-carboxamide = 5-formamido-1-(5-phospho-D-ribosyl)imidazole-4-carboxamide + (6S)-5,6,7,8-tetrahydrofolate. The enzyme catalyses IMP + H2O = 5-formamido-1-(5-phospho-D-ribosyl)imidazole-4-carboxamide. The protein operates within purine metabolism; IMP biosynthesis via de novo pathway; 5-formamido-1-(5-phospho-D-ribosyl)imidazole-4-carboxamide from 5-amino-1-(5-phospho-D-ribosyl)imidazole-4-carboxamide (10-formyl THF route): step 1/1. It participates in purine metabolism; IMP biosynthesis via de novo pathway; IMP from 5-formamido-1-(5-phospho-D-ribosyl)imidazole-4-carboxamide: step 1/1. In Yersinia pseudotuberculosis serotype O:1b (strain IP 31758), this protein is Bifunctional purine biosynthesis protein PurH.